The sequence spans 92 residues: Small nuclear ribonucleoprotein E (92 aa).

Residues 18-92 (INLIFRYLQN…NITLLQSVSN (75 aa)) form the Sm domain.

This sequence belongs to the snRNP Sm proteins family. As to quaternary structure, core component of the spliceosomal U1, U2, U4 and U5 small nuclear ribonucleoproteins (snRNPs), the building blocks of the spliceosome. Most spliceosomal snRNPs contain a common set of Sm proteins, SNRPB, SNRPD1, SNRPD2, SNRPD3, SNRPE, SNRPF and SNRPG that assemble in a heptameric protein ring on the Sm site of the small nuclear RNA to form the core snRNP. Component of the U1 snRNP. The U1 snRNP is composed of the U1 snRNA and the 7 core Sm proteins SNRPB, SNRPD1, SNRPD2, SNRPD3, SNRPE, SNRPF and SNRPG, and at least three U1 snRNP-specific proteins SNRNP70/U1-70K, SNRPA/U1-A and SNRPC/U1-C. Component of the U4/U6-U5 tri-snRNP complex composed of the U4, U6 and U5 snRNAs and at least PRPF3, PRPF4, PRPF6, PRPF8, PRPF31, SNRNP200, TXNL4A, SNRNP40, SNRPB, SNRPD1, SNRPD2, SNRPD3, SNRPE, SNRPF, SNRPG, DDX23, CD2BP2, PPIH, SNU13, EFTUD2, SART1 and USP39, plus LSM2, LSM3, LSM4, LSM5, LSM6, LSM7 and LSM8. Component of the U7 snRNP complex, or U7 Sm protein core complex, that is composed of the U7 snRNA and at least LSM10, LSM11, SNRPB, SNRPD3, SNRPE, SNRPF and SNRPG; the complex does not contain SNRPD1 and SNRPD2. Component of the minor spliceosome, which splices U12-type introns. Part of the SMN-Sm complex that contains SMN1, GEMIN2/SIP1, DDX20/GEMIN3, GEMIN4, GEMIN5, GEMIN6, GEMIN7, GEMIN8, STRAP/UNRIP and the Sm proteins SNRPB, SNRPD1, SNRPD2, SNRPD3, SNRPE, SNRPF and SNRPG; catalyzes core snRNPs assembly. Forms a 6S pICln-Sm complex composed of CLNS1A/pICln, SNRPD1, SNRPD2, SNRPE, SNRPF and SNRPG; ring-like structure where CLNS1A/pICln mimics additional Sm proteins and which is unable to assemble into the core snRNP. Interacts with SMN1; the interaction is direct. Interacts with GEMIN2 (via N-terminus); the interaction is direct. Interacts with SNRPF; the interaction is direct. Interacts with SNRPG; the interaction is direct.

Its subcellular location is the cytoplasm. The protein resides in the cytosol. It is found in the nucleus. Plays a role in pre-mRNA splicing as a core component of the spliceosomal U1, U2, U4 and U5 small nuclear ribonucleoproteins (snRNPs), the building blocks of the spliceosome. Component of both the pre-catalytic spliceosome B complex and activated spliceosome C complexes. As a component of the minor spliceosome, involved in the splicing of U12-type introns in pre-mRNAs. As part of the U7 snRNP it is involved in histone 3'-end processing. This Sus scrofa (Pig) protein is Small nuclear ribonucleoprotein E (SNRPE).